The sequence spans 556 residues: 2-succinyl-5-enolpyruvyl-6-hydroxy-3-cyclohexene-1-carboxylate synthase (556 aa).

Belongs to the TPP enzyme family. MenD subfamily. As to quaternary structure, homodimer. Mg(2+) is required as a cofactor. The cofactor is Mn(2+). Thiamine diphosphate serves as cofactor.

It catalyses the reaction isochorismate + 2-oxoglutarate + H(+) = 5-enolpyruvoyl-6-hydroxy-2-succinyl-cyclohex-3-ene-1-carboxylate + CO2. The protein operates within quinol/quinone metabolism; 1,4-dihydroxy-2-naphthoate biosynthesis; 1,4-dihydroxy-2-naphthoate from chorismate: step 2/7. It functions in the pathway quinol/quinone metabolism; menaquinone biosynthesis. Its function is as follows. Catalyzes the thiamine diphosphate-dependent decarboxylation of 2-oxoglutarate and the subsequent addition of the resulting succinic semialdehyde-thiamine pyrophosphate anion to isochorismate to yield 2-succinyl-5-enolpyruvyl-6-hydroxy-3-cyclohexene-1-carboxylate (SEPHCHC). This Escherichia fergusonii (strain ATCC 35469 / DSM 13698 / CCUG 18766 / IAM 14443 / JCM 21226 / LMG 7866 / NBRC 102419 / NCTC 12128 / CDC 0568-73) protein is 2-succinyl-5-enolpyruvyl-6-hydroxy-3-cyclohexene-1-carboxylate synthase.